We begin with the raw amino-acid sequence, 209 residues long: MKPKIDYSIYLVTDRDLMSTETLEEAVEKAIIGGCTLIQLREKDCSSLDFYNTAVRVKEITDKHNIPLIINDRVDIALAVDAAGVHVGQSDIPAAIVRKVIGNDKILGVSTGSVNEALEAEKNGADYLGVGAMYSTGTKKDADSTSMNELRKIRENVSIPIVVIGGINKDRVKDFKGIGIDGLAIVSAIIAKEDITTAAKELKNEFIKI.

Residues 39-43 (QLREK) and asparagine 71 contribute to the 4-amino-2-methyl-5-(diphosphooxymethyl)pyrimidine site. Residues aspartate 72 and aspartate 91 each coordinate Mg(2+). Serine 110 contacts 4-amino-2-methyl-5-(diphosphooxymethyl)pyrimidine. Residue 136–138 (TGT) coordinates 2-[(2R,5Z)-2-carboxy-4-methylthiazol-5(2H)-ylidene]ethyl phosphate. Lysine 139 is a 4-amino-2-methyl-5-(diphosphooxymethyl)pyrimidine binding site. 2-[(2R,5Z)-2-carboxy-4-methylthiazol-5(2H)-ylidene]ethyl phosphate-binding positions include glycine 166 and 186–187 (VS).

This sequence belongs to the thiamine-phosphate synthase family. The cofactor is Mg(2+).

The enzyme catalyses 2-[(2R,5Z)-2-carboxy-4-methylthiazol-5(2H)-ylidene]ethyl phosphate + 4-amino-2-methyl-5-(diphosphooxymethyl)pyrimidine + 2 H(+) = thiamine phosphate + CO2 + diphosphate. It catalyses the reaction 2-(2-carboxy-4-methylthiazol-5-yl)ethyl phosphate + 4-amino-2-methyl-5-(diphosphooxymethyl)pyrimidine + 2 H(+) = thiamine phosphate + CO2 + diphosphate. It carries out the reaction 4-methyl-5-(2-phosphooxyethyl)-thiazole + 4-amino-2-methyl-5-(diphosphooxymethyl)pyrimidine + H(+) = thiamine phosphate + diphosphate. It participates in cofactor biosynthesis; thiamine diphosphate biosynthesis; thiamine phosphate from 4-amino-2-methyl-5-diphosphomethylpyrimidine and 4-methyl-5-(2-phosphoethyl)-thiazole: step 1/1. In terms of biological role, condenses 4-methyl-5-(beta-hydroxyethyl)thiazole monophosphate (THZ-P) and 2-methyl-4-amino-5-hydroxymethyl pyrimidine pyrophosphate (HMP-PP) to form thiamine monophosphate (TMP). This Clostridium beijerinckii (strain ATCC 51743 / NCIMB 8052) (Clostridium acetobutylicum) protein is Thiamine-phosphate synthase.